The chain runs to 529 residues: Bifunctional purine biosynthesis protein PurH (529 aa).

In terms of domain architecture, MGS-like spans 1–148; sequence MQQRRPIRRA…KNHKDVAIVV (148 aa).

It belongs to the PurH family.

It catalyses the reaction (6R)-10-formyltetrahydrofolate + 5-amino-1-(5-phospho-beta-D-ribosyl)imidazole-4-carboxamide = 5-formamido-1-(5-phospho-D-ribosyl)imidazole-4-carboxamide + (6S)-5,6,7,8-tetrahydrofolate. The catalysed reaction is IMP + H2O = 5-formamido-1-(5-phospho-D-ribosyl)imidazole-4-carboxamide. It functions in the pathway purine metabolism; IMP biosynthesis via de novo pathway; 5-formamido-1-(5-phospho-D-ribosyl)imidazole-4-carboxamide from 5-amino-1-(5-phospho-D-ribosyl)imidazole-4-carboxamide (10-formyl THF route): step 1/1. The protein operates within purine metabolism; IMP biosynthesis via de novo pathway; IMP from 5-formamido-1-(5-phospho-D-ribosyl)imidazole-4-carboxamide: step 1/1. The sequence is that of Bifunctional purine biosynthesis protein PurH from Pectobacterium carotovorum subsp. carotovorum (strain PC1).